A 370-amino-acid polypeptide reads, in one-letter code: Prolactin-releasing peptide receptor (370 aa).

Topologically, residues 1-62 (MASSTTRGPR…LQLVHQLKGL (62 aa)) are extracellular. Residues Asn27 and Asn36 are each glycosylated (N-linked (GlcNAc...) asparagine). The helical transmembrane segment at 63–83 (IVLLYSVVVVVGLVGNCLLVL) threads the bilayer. The Cytoplasmic segment spans residues 84-101 (VIARVRRLHNVTNFLIGN). A helical transmembrane segment spans residues 102-122 (LALSDVLMCTACVPLTLAYAF). Residues 123–126 (EPRG) are Extracellular-facing. The chain crosses the membrane as a helical span at residues 127-147 (WVFGGGLCHLVFFLQPVTVYV). Residues Cys134 and Cys211 are joined by a disulfide bond. Over 148–175 (SVFTLTTIAVDRYVVLVHPLRRRISLRL) the chain is Cytoplasmic. Residues 176-196 (SAYAVLAIWALSAVLALPAAV) form a helical membrane-spanning segment. Topologically, residues 197-225 (HTYHVELKPHDVRLCEEFWGSQERQRQLY) are extracellular. The chain crosses the membrane as a helical span at residues 226–246 (AWGLLLVTYLLPLLVILLSYV). Over 247–276 (RVSVKLRNRVVPGCVTQSQADWDRARRRRT) the chain is Cytoplasmic. Residues 277 to 297 (FCLLVVIVVVFAVCWLPLHVF) traverse the membrane as a helical segment. Residues 298-317 (NLLRDLDPHAIDPYAFGLVQ) lie on the Extracellular side of the membrane. A helical transmembrane segment spans residues 318–338 (LLCHWLAMSSACYNPFIYAWL). At 339–369 (HDSFREELRKLLVAWPRKIAPHGQNMTVSVV) the chain is on the cytoplasmic side. Residues 365–370 (TVSVVI) form a required for interaction with GRIP1, GRIP2 and PICK1 region.

The protein belongs to the G-protein coupled receptor 1 family. As to quaternary structure, interacts through its C-terminal region with the PDZ domain-containing proteins GRIP1, GRIP2 and PICK1. Interacts with PDZ domains 4 and 5 of GRIP1 and with the PDZ domain of PICK1. As to expression, only detected in the pituitary gland and in all cell types of pituitary adenomas.

It is found in the cell membrane. In terms of biological role, receptor for prolactin-releasing peptide (PrRP). Implicated in lactation, regulation of food intake and pain-signal processing. The sequence is that of Prolactin-releasing peptide receptor (PRLHR) from Homo sapiens (Human).